Here is a 571-residue protein sequence, read N- to C-terminus: Protein dead ringer homolog (571 aa).

2 disordered regions span residues 45 to 117 and 190 to 229; these read QHQQ…EPDK and KRMQ…SCNG. Residues 49 to 77 show a composition bias toward basic and acidic residues; that stretch reads RMMEQHKNDDVISNDVRCDDFSDGGERQR. Positions 195–206 are enriched in polar residues; that stretch reads DHNIQQSTNHIP. Over residues 207–224 the composition is skewed to low complexity; that stretch reads TPSSASSHTSSGSVTSQT. The ARID domain maps to 249–341; it reads DIKRKEFLDD…YLYPFECERE (93 aa). Low complexity predominate over residues 459-471; sequence AAHHAAQQAAQHQ. A disordered region spans residues 459-528; sequence AAHHAAQQAA…GDRGRHNEMS (70 aa). The 86-residue stretch at 473–558 folds into the REKLES domain; sequence SLKKEIDSDY…GVLFAHSPNH (86 aa). Basic and acidic residues-rich tracts occupy residues 487–507 and 518–527; these read PPEK…DNQR and MGDRGRHNEM.

It localises to the nucleus. Transcription factor. The polypeptide is Protein dead ringer homolog (Ci-DRIL1/2) (Ciona intestinalis (Transparent sea squirt)).